The sequence spans 180 residues: Pro-glucagon (180 aa).

The N-terminal stretch at 1-20 is a signal peptide; sequence MKTVYIVAGLFVMLVQGSWQ. The tract at residues 23-59 is disordered; sequence PQDTEENARSFPASQTEPLEDPDQINEDKRHSQGTFT. At Ser-54 the chain carries Phosphoserine. The propeptide occupies 84 to 89; it reads NRNNIA. Residues Ser-105 and Ser-108 each carry the phosphoserine modification. Arg-127 bears the Arginine amide mark. Positions 131 to 145 are excised as a propeptide; that stretch reads DFPEEVAIAEELGRR. Phosphoserine is present on residues Ser-150 and Ser-152.

The protein belongs to the glucagon family. Post-translationally, proglucagon is post-translationally processed in a tissue-specific manner in pancreatic A cells and intestinal L cells. In pancreatic A cells, the major bioactive hormone is glucagon cleaved by PCSK2/PC2. In the intestinal L cells PCSK1/PC1 liberates GLP-1, GLP-2, glicentin and oxyntomodulin. GLP-1 is further N-terminally truncated by post-translational processing in the intestinal L cells resulting in GLP-1(7-37) GLP-1-(7-36)amide. The C-terminal amidation is neither important for the metabolism of GLP-1 nor for its effects on the endocrine pancreas. In terms of tissue distribution, glucagon is secreted in the A cells of the islets of Langerhans. GLP-1, GLP-2, oxyntomodulin and glicentin are secreted from enteroendocrine cells throughout the gastrointestinal tract.

It is found in the secreted. In terms of biological role, plays a key role in glucose metabolism and homeostasis. Regulates blood glucose by increasing gluconeogenesis and decreasing glycolysis. A counterregulatory hormone of insulin, raises plasma glucose levels in response to insulin-induced hypoglycemia. Plays an important role in initiating and maintaining hyperglycemic conditions in diabetes. Potent stimulator of glucose-dependent insulin release. Also stimulates insulin release in response to IL6. Plays important roles on gastric motility and the suppression of plasma glucagon levels. May be involved in the suppression of satiety and stimulation of glucose disposal in peripheral tissues, independent of the actions of insulin. Has growth-promoting activities on intestinal epithelium. May also regulate the hypothalamic pituitary axis (HPA) via effects on LH, TSH, CRH, oxytocin, and vasopressin secretion. Increases islet mass through stimulation of islet neogenesis and pancreatic beta cell proliferation. Inhibits beta cell apoptosis. Functionally, stimulates intestinal growth and up-regulates villus height in the small intestine, concomitant with increased crypt cell proliferation and decreased enterocyte apoptosis. The gastrointestinal tract, from the stomach to the colon is the principal target for GLP-2 action. Plays a key role in nutrient homeostasis, enhancing nutrient assimilation through enhanced gastrointestinal function, as well as increasing nutrient disposal. Stimulates intestinal glucose transport and decreases mucosal permeability. Its function is as follows. May modulate gastric acid secretion and the gastro-pyloro-duodenal activity. May play an important role in intestinal mucosal growth in the early period of life. In terms of biological role, oxyntomodulin significantly reduces food intake. The protein is Pro-glucagon (Gcg) of Rattus norvegicus (Rat).